We begin with the raw amino-acid sequence, 489 residues long: Glutamyl-tRNA(Gln) amidotransferase subunit A (489 aa).

Active-site charge relay system residues include Lys-80 and Ser-160. The Acyl-ester intermediate role is filled by Ser-184.

It belongs to the amidase family. GatA subfamily. In terms of assembly, heterotrimer of A, B and C subunits.

It carries out the reaction L-glutamyl-tRNA(Gln) + L-glutamine + ATP + H2O = L-glutaminyl-tRNA(Gln) + L-glutamate + ADP + phosphate + H(+). Its function is as follows. Allows the formation of correctly charged Gln-tRNA(Gln) through the transamidation of misacylated Glu-tRNA(Gln) in organisms which lack glutaminyl-tRNA synthetase. The reaction takes place in the presence of glutamine and ATP through an activated gamma-phospho-Glu-tRNA(Gln). The sequence is that of Glutamyl-tRNA(Gln) amidotransferase subunit A from Wolbachia pipientis wMel.